The primary structure comprises 310 residues: tRNA dimethylallyltransferase (310 aa).

An ATP-binding site is contributed by 11-18 (GPTAVGKT). 13-18 (TAVGKT) contacts substrate. The interaction with substrate tRNA stretch occupies residues 36–39 (DSMQ).

This sequence belongs to the IPP transferase family. Monomer. Mg(2+) is required as a cofactor.

The catalysed reaction is adenosine(37) in tRNA + dimethylallyl diphosphate = N(6)-dimethylallyladenosine(37) in tRNA + diphosphate. Catalyzes the transfer of a dimethylallyl group onto the adenine at position 37 in tRNAs that read codons beginning with uridine, leading to the formation of N6-(dimethylallyl)adenosine (i(6)A). The polypeptide is tRNA dimethylallyltransferase (Shouchella clausii (strain KSM-K16) (Alkalihalobacillus clausii)).